Reading from the N-terminus, the 778-residue chain is Beta-phellandrene synthase (neryl-diphosphate-cyclizing), chloroplastic (778 aa).

A chloroplast-targeting transit peptide spans 1-36 (MIVGYRSTIITLSHPKLGNGKTISSNAIFQRSCRVR). Residues Asp531, Asn676, and Glu684 each coordinate Mg(2+). Positions 531 to 535 (DDHFE) match the DDXXD motif motif.

This sequence belongs to the terpene synthase family. Tpse subfamily. It depends on Mg(2+) as a cofactor. Trichomes.

Its subcellular location is the plastid. It localises to the chloroplast. It carries out the reaction neryl diphosphate = beta-phellandrene + diphosphate. In terms of biological role, monoterpene synthase catalyzing the production of beta-phellandrene from neryl diphosphate. Also produces lower amounts of delta-2-carene, alpha-phellandrene and limonene. When incubated in vitro with geranyl diphosphate, catalyzes the formation of acyclic myrcene and ocimene as major products in addition to beta-phellandrene. This Solanum lycopersicum (Tomato) protein is Beta-phellandrene synthase (neryl-diphosphate-cyclizing), chloroplastic (PHS1).